A 264-amino-acid polypeptide reads, in one-letter code: Small ribosomal subunit protein eS1 (264 aa).

Belongs to the eukaryotic ribosomal protein eS1 family. Component of the small ribosomal subunit. Mature ribosomes consist of a small (40S) and a large (60S) subunit. The 40S subunit contains about 33 different proteins and 1 molecule of RNA (18S). The 60S subunit contains about 49 different proteins and 3 molecules of RNA (25S, 5.8S and 5S).

It is found in the cytoplasm. This is Small ribosomal subunit protein eS1 from Babesia bovis.